Reading from the N-terminus, the 262-residue chain is MVLISVLANLLILQLSYAQKSSELVIGGDECNINEHRFLVALYNSRSRTLFCGGTLINQEWVLTAAHCERKNFRIKLGIHSKKVPNEDEQTRVPKEKFFCLSSKNYTLWDKDIMLIRLDSPVSNSEHIAPLSLPSSPPSVGSVCRIMGWGRISPTKETYPDVPHCANINLLEYEMCRAPYPEFGLPATSRTLCAGILEGGKDTCRGDSGGPLICNGQFQGIASWGDDPCAQPHKPAAYTKVFDHLDWIQSIIAGNTDASCPP.

Residues 1 to 18 (MVLISVLANLLILQLSYA) form the signal peptide. A propeptide spanning residues 19 to 24 (QKSSEL) is cleaved from the precursor. A Peptidase S1 domain is found at 25–253 (VIGGDECNIN…HLDWIQSIIA (229 aa)). Intrachain disulfides connect Cys-31-Cys-165, Cys-52-Cys-68, Cys-100-Cys-260, Cys-144-Cys-214, Cys-176-Cys-193, and Cys-204-Cys-229. His-67 acts as the Charge relay system in catalysis. A glycan (N-linked (GlcNAc...) asparagine) is linked at Asn-105. The active-site Charge relay system is Asp-112. Ser-208 (charge relay system) is an active-site residue.

Belongs to the peptidase S1 family. Snake venom subfamily. Monomer. Post-translationally, N-glycosylated. In terms of tissue distribution, expressed by the venom gland.

The protein resides in the secreted. With respect to regulation, strongly inhibited by PMSF, and moderately by benzamidine and soybean trypsin inhibitor. In terms of biological role, thrombin-like snake venom serine protease. Has a coagulant activity. Acts on alpha-chains of fibrinogen (FGA) generating fibrinopeptide A. This Gloydius ussuriensis (Ussuri mamushi) protein is Thrombin-like enzyme calobin-1.